The sequence spans 305 residues: Glycine--tRNA ligase alpha subunit (305 aa).

This sequence belongs to the class-II aminoacyl-tRNA synthetase family. Tetramer of two alpha and two beta subunits.

It localises to the cytoplasm. It catalyses the reaction tRNA(Gly) + glycine + ATP = glycyl-tRNA(Gly) + AMP + diphosphate. The protein is Glycine--tRNA ligase alpha subunit of Janthinobacterium sp. (strain Marseille) (Minibacterium massiliensis).